A 257-amino-acid polypeptide reads, in one-letter code: V-type proton ATPase subunit D (257 aa).

Residues 211 to 233 (KKKDLKAKEAQKEENSANKTIME) are disordered. A compositionally biased stretch (basic and acidic residues) spans 216–226 (KAKEAQKEENS).

It belongs to the V-ATPase D subunit family. As to quaternary structure, V-ATPase is a heteromultimeric enzyme composed of a peripheral catalytic V1 complex (components A to H) attached to an integral membrane V0 proton pore complex (components: a, c, c', c'' and d).

Functionally, subunit of the peripheral V1 complex of vacuolar ATPase. Vacuolar ATPase is responsible for acidifying a variety of intracellular compartments in eukaryotic cells, thus providing most of the energy required for transport processes in the vacuolar system. This chain is V-type proton ATPase subunit D (atp6v1d), found in Dictyostelium discoideum (Social amoeba).